Here is a 561-residue protein sequence, read N- to C-terminus: Small ribosomal subunit protein bS1 (561 aa).

6 S1 motif domains span residues 22-88 (GEVI…LSRE), 106-172 (GDIL…VSRR), 193-261 (GSVI…LGMK), 278-348 (GTRL…LGMK), 365-435 (GDKI…LGIK), and 452-521 (GSLV…LSVK).

The protein belongs to the bacterial ribosomal protein bS1 family.

Its function is as follows. Binds mRNA; thus facilitating recognition of the initiation point. It is needed to translate mRNA with a short Shine-Dalgarno (SD) purine-rich sequence. The polypeptide is Small ribosomal subunit protein bS1 (rpsA) (Neisseria meningitidis serogroup B (strain ATCC BAA-335 / MC58)).